The following is a 107-amino-acid chain: 4-carboxymethyl-4-methylbutenolide mutase (107 aa).

The Proton donor/acceptor role is filled by histidine 26. Residues histidine 26 and tyrosine 39 each coordinate 3-methylmuconolactone. Residues histidine 26 and tyrosine 39 each contribute to the 4-methylmuconolactone site.

Belongs to the MmlI family. In terms of assembly, homodimer.

It catalyses the reaction 4-methylmuconolactone = 3-methylmuconolactone. Inhibited by p-chloromercuribenzoate. Its function is as follows. Isomerase involved in the degradation of 4-methylsalicylate and 5-methylsalicylate. Catalyzes the isomerization of the dead-end metabolite 4-methylmuconolactone (4-ML) to 3-methylmuconolactone (3-ML), which can then be further degraded through a modified 3-oxoadipate pathway. Can also use 1-methylbislactone but not 3-methyl-cis,cis-muconate. The polypeptide is 4-carboxymethyl-4-methylbutenolide mutase (Pseudomonas reinekei).